Here is a 114-residue protein sequence, read N- to C-terminus: Propane 2-monooxygenase, effector component (114 aa).

The protein belongs to the TmoD/XamoD family. In terms of assembly, the propane 2-monooxygenase multicomponent enzyme system is composed of an electron transfer component and a monooxygenase component interacting with the effector protein MimD. The electron transfer component is composed of a reductase (MimB), and the monooxygenase component is formed by a large subunit (MimA) and a small subunit (MimC).

Effector component of the propane 2-monooxygenase multicomponent enzyme system which is involved in the degradation of propane via the O2-dependent hydroxylation of propane. This is Propane 2-monooxygenase, effector component from Mycolicibacterium smegmatis (strain ATCC 700084 / mc(2)155) (Mycobacterium smegmatis).